We begin with the raw amino-acid sequence, 129 residues long: Succinate dehydrogenase assembly factor 3, mitochondrial (129 aa).

The N-terminal 21 residues, 1-21, are a transit peptide targeting the mitochondrion; it reads MQVNHLLRQAVKQTTRAGRLG.

It belongs to the complex I LYR family. SDHAF3 subfamily. In terms of assembly, interacts with the iron-sulfur protein subunit within the SDH catalytic dimer.

The protein localises to the mitochondrion matrix. Plays an essential role in the assembly of succinate dehydrogenase (SDH), an enzyme complex (also referred to as respiratory complex II) that is a component of both the tricarboxylic acid (TCA) cycle and the mitochondrial electron transport chain, and which couples the oxidation of succinate to fumarate with the reduction of ubiquinone (coenzyme Q) to ubiquinol. Promotes maturation of the iron-sulfur protein subunit of the SDH catalytic dimer, protecting it from the deleterious effects of oxidants. May act together with SDHAF1. This is Succinate dehydrogenase assembly factor 3, mitochondrial from Kluyveromyces lactis (strain ATCC 8585 / CBS 2359 / DSM 70799 / NBRC 1267 / NRRL Y-1140 / WM37) (Yeast).